The sequence spans 285 residues: Bifunctional protein FolD (285 aa).

Residues 165-167 and Ser190 each bind NADP(+); that span reads GRS.

It belongs to the tetrahydrofolate dehydrogenase/cyclohydrolase family. As to quaternary structure, homodimer.

The enzyme catalyses (6R)-5,10-methylene-5,6,7,8-tetrahydrofolate + NADP(+) = (6R)-5,10-methenyltetrahydrofolate + NADPH. It carries out the reaction (6R)-5,10-methenyltetrahydrofolate + H2O = (6R)-10-formyltetrahydrofolate + H(+). The protein operates within one-carbon metabolism; tetrahydrofolate interconversion. Catalyzes the oxidation of 5,10-methylenetetrahydrofolate to 5,10-methenyltetrahydrofolate and then the hydrolysis of 5,10-methenyltetrahydrofolate to 10-formyltetrahydrofolate. This Ligilactobacillus salivarius (strain UCC118) (Lactobacillus salivarius) protein is Bifunctional protein FolD.